Here is a 416-residue protein sequence, read N- to C-terminus: Imidazolonepropionase (416 aa).

Residues histidine 82 and histidine 84 each coordinate Fe(3+). 2 residues coordinate Zn(2+): histidine 82 and histidine 84. Positions 91, 154, and 187 each coordinate 4-imidazolone-5-propanoate. Residue tyrosine 154 participates in N-formimidoyl-L-glutamate binding. Histidine 252 is a Fe(3+) binding site. Histidine 252 lines the Zn(2+) pocket. Glutamate 255 is a binding site for 4-imidazolone-5-propanoate. Aspartate 326 is a Fe(3+) binding site. Aspartate 326 contacts Zn(2+). The N-formimidoyl-L-glutamate site is built by asparagine 328 and glycine 330. Residue serine 331 participates in 4-imidazolone-5-propanoate binding.

Belongs to the metallo-dependent hydrolases superfamily. HutI family. Zn(2+) is required as a cofactor. Fe(3+) serves as cofactor.

It is found in the cytoplasm. It catalyses the reaction 4-imidazolone-5-propanoate + H2O = N-formimidoyl-L-glutamate. It participates in amino-acid degradation; L-histidine degradation into L-glutamate; N-formimidoyl-L-glutamate from L-histidine: step 3/3. Its function is as follows. Catalyzes the hydrolytic cleavage of the carbon-nitrogen bond in imidazolone-5-propanoate to yield N-formimidoyl-L-glutamate. It is the third step in the universal histidine degradation pathway. The protein is Imidazolonepropionase of Parabacteroides distasonis (strain ATCC 8503 / DSM 20701 / CIP 104284 / JCM 5825 / NCTC 11152).